A 338-amino-acid polypeptide reads, in one-letter code: Ketol-acid reductoisomerase (NADP(+)) (338 aa).

The region spanning 1–181 (MQVYYDKDCD…GGGRTGIIET (181 aa)) is the KARI N-terminal Rossmann domain. NADP(+) contacts are provided by residues 24-27 (YGSQ), Arg-47, Ser-50, Ser-52, and 82-85 (DEFQ). Residue His-107 is part of the active site. Gly-133 contributes to the NADP(+) binding site. One can recognise a KARI C-terminal knotted domain in the interval 182–327 (TFKDETETDL…EKLRGMMPWI (146 aa)). Residues Asp-190, Glu-194, Glu-226, and Glu-230 each coordinate Mg(2+). Substrate is bound at residue Ser-251.

The protein belongs to the ketol-acid reductoisomerase family. The cofactor is Mg(2+).

It catalyses the reaction (2R)-2,3-dihydroxy-3-methylbutanoate + NADP(+) = (2S)-2-acetolactate + NADPH + H(+). It carries out the reaction (2R,3R)-2,3-dihydroxy-3-methylpentanoate + NADP(+) = (S)-2-ethyl-2-hydroxy-3-oxobutanoate + NADPH + H(+). Its pathway is amino-acid biosynthesis; L-isoleucine biosynthesis; L-isoleucine from 2-oxobutanoate: step 2/4. It participates in amino-acid biosynthesis; L-valine biosynthesis; L-valine from pyruvate: step 2/4. Functionally, involved in the biosynthesis of branched-chain amino acids (BCAA). Catalyzes an alkyl-migration followed by a ketol-acid reduction of (S)-2-acetolactate (S2AL) to yield (R)-2,3-dihydroxy-isovalerate. In the isomerase reaction, S2AL is rearranged via a Mg-dependent methyl migration to produce 3-hydroxy-3-methyl-2-ketobutyrate (HMKB). In the reductase reaction, this 2-ketoacid undergoes a metal-dependent reduction by NADPH to yield (R)-2,3-dihydroxy-isovalerate. In Alcanivorax borkumensis (strain ATCC 700651 / DSM 11573 / NCIMB 13689 / SK2), this protein is Ketol-acid reductoisomerase (NADP(+)).